A 345-amino-acid chain; its full sequence is tRNA pseudouridine synthase B (345 aa).

The tract at residues 1-33 (MGGNSQPHQEPRRVNNDPRAKQQKGNQVRRDRR) is disordered. Residues 9 to 20 (QEPRRVNNDPRA) show a composition bias toward basic and acidic residues. Asp-72 serves as the catalytic Nucleophile.

This sequence belongs to the pseudouridine synthase TruB family. Type 1 subfamily.

It catalyses the reaction uridine(55) in tRNA = pseudouridine(55) in tRNA. Functionally, responsible for synthesis of pseudouridine from uracil-55 in the psi GC loop of transfer RNAs. The polypeptide is tRNA pseudouridine synthase B (Bradyrhizobium diazoefficiens (strain JCM 10833 / BCRC 13528 / IAM 13628 / NBRC 14792 / USDA 110)).